The sequence spans 577 residues: MNKQDVMKLQTCVLKVNVHCEGCKHKVKKQLQKIEGVYSVKADVEQGRVTVTGNIDPALLVKKLSKSGKHAEILGGGGGGGGGGGKGFPNLNGQFANLNMGGNNKPKGGKESNQVKGKAGGGGGGGQNHGHGQPMQLNPQQIQQMMMMKAAHGGGGGGQMKMPPMAAKDQKKSVKFADDEDDEFSEDDYDDEDFSEDDYDDDEFDDDEDDDDEMGHGHGHGGGGGNHMPPNKMMMPNKMMPQMGGHHGNGGGPKGPNEIMMMMNGFKGGGGGGKKGGGGGFEIPVQMKGMGEGKNGKDGKKGKGGEKGKKEGKENKGGGKTGKTDAKSGGGGLLGFFKKGKSGNGDEKKSAGKKDGHGGNKVKSHGGGGGVQHYDSGPKKGGGGTKGGGHGGLDIDELMKHSKGGGGGGNKGNHNHSAKGIGGGPMGPGGPMGPGGPMGQGGPMGMMGPGGPMSMMGPGGPMGPMGGQGGSYPAVQGLPMSGGGGYYPGPPQASQQMNQQQYMQMMMNQQQQQQQQQQAVAHGGYGGGHGGDMYHPMMYARPYPAVNYAHPPPMPPPHSDSYTHMFSDENPGSCSIM.

Positions 9–72 (LQTCVLKVNV…KLSKSGKHAE (64 aa)) constitute an HMA domain. A metal cation is bound by residues Cys20 and Cys23. Residues 77–87 (GGGGGGGGGKG) are compositionally biased toward gly residues. 2 disordered regions span residues 77 to 136 (GGGG…QPMQ) and 150 to 451 (AAHG…GPGG). Over residues 97-106 (NLNMGGNNKP) the composition is skewed to low complexity. A compositionally biased stretch (gly residues) spans 118 to 129 (KAGGGGGGGQNH). The segment covering 168-177 (KDQKKSVKFA) has biased composition (basic and acidic residues). Residues 178-213 (DDEDDEFSEDDYDDEDFSEDDYDDDEFDDDEDDDDE) show a composition bias toward acidic residues. Low complexity predominate over residues 227-244 (HMPPNKMMMPNKMMPQMG). Gly residues-rich tracts occupy residues 245-254 (GHHGNGGGPK) and 266-281 (FKGGGGGGKKGGGGGF). 2 stretches are compositionally biased toward basic and acidic residues: residues 294–326 (KNGKDGKKGKGGEKGKKEGKENKGGGKTGKTDA) and 344–358 (NGDEKKSAGKKDGHG). Composition is skewed to gly residues over residues 379–392 (KKGGGGTKGGGHGG) and 420–451 (GIGGGPMGPGGPMGPGGPMGQGGPMGMMGPGG). At Cys574 the chain carries Cysteine methyl ester. Cys574 carries S-farnesyl cysteine lipidation. Positions 575–577 (SIM) are cleaved as a propeptide — removed in mature form.

The protein belongs to the HIPP family.

Functionally, heavy-metal-binding protein. This is Heavy metal-associated isoprenylated plant protein 34 from Arabidopsis thaliana (Mouse-ear cress).